The sequence spans 190 residues: Shikimate kinase (190 aa).

Position 19 to 24 (G19 to T24) interacts with ATP. T23 is a binding site for Mg(2+). Substrate-binding residues include D41, R65, and G87. R124 contributes to the ATP binding site. R143 is a binding site for substrate.

Belongs to the shikimate kinase family. In terms of assembly, monomer. It depends on Mg(2+) as a cofactor.

The protein resides in the cytoplasm. The catalysed reaction is shikimate + ATP = 3-phosphoshikimate + ADP + H(+). Its pathway is metabolic intermediate biosynthesis; chorismate biosynthesis; chorismate from D-erythrose 4-phosphate and phosphoenolpyruvate: step 5/7. Catalyzes the specific phosphorylation of the 3-hydroxyl group of shikimic acid using ATP as a cosubstrate. In Synechococcus sp. (strain ATCC 27144 / PCC 6301 / SAUG 1402/1) (Anacystis nidulans), this protein is Shikimate kinase.